A 395-amino-acid chain; its full sequence is MAELHLSFPAYSLCWINNHQMAVGGGGGTTKSGVKNKLKLLSYEDYEPEVGEGHTKFIEHGEIELKHSDDAVMSLGYFKNELIAGINNTIDGKLIDHLRLYGRKDKLFEEKNALRLTDFDNDEQYQRLCLFEPLHDAICISCTNKSFFIISKNDHKVLFEKHGSDVYDVSSTEDKLAIAVDDRVEIYDWNTFELVQVLYMPVERATVRGVSFLPNQSIVAAYNYIKDSKRFASLVRFDYSSKNQLWRFGMIRDLKNAKGVTCFCCDKENGMIIVAGADCSIRFMSLDLTKLSQVYKHSLPVTDMQLSPDSEALVSVSADGLLCLQFVGKFKNLSAVKLEDAGVILRLSLMFPFVLAILYFYLQLLFPDEKLDAIHRFFSFILHIFSKYTIRNYDL.

The Cytoplasmic segment spans residues 1 to 346 (MAELHLSFPA…KLEDAGVILR (346 aa)). 2 WD repeats span residues 250–285 (MIRD…RFMS) and 290–326 (KLSQ…CLQF). The helical; Signal-anchor for type II membrane protein transmembrane segment at 347-367 (LSLMFPFVLAILYFYLQLLFP) threads the bilayer. Over 368-395 (DEKLDAIHRFFSFILHIFSKYTIRNYDL) the chain is Lumenal.

Its subcellular location is the endoplasmic reticulum membrane. The protein localises to the golgi apparatus. It localises to the cis-Golgi network membrane. Its function is as follows. Required for the formation of transport vesicles from the ER. This function involves the cytoplasmic domain of the protein, which is thought to interact with the small GTP-binding protein sar1. This is Membrane glycoprotein spo14 (spo14) from Schizosaccharomyces pombe (strain 972 / ATCC 24843) (Fission yeast).